A 131-amino-acid polypeptide reads, in one-letter code: Histone H2B.2 (131 aa).

Over residues 1–19 (MSSAAEKKPASKAPAEKKP) the composition is skewed to basic and acidic residues. The disordered stretch occupies residues 1-37 (MSSAAEKKPASKAPAEKKPAAKKTSTSVDGKKRSKVR). Residues Lys-7 and Lys-8 each carry the N6-acetyllysine; alternate modification. Residues Lys-7 and Lys-8 each participate in a glycyl lysine isopeptide (Lys-Gly) (interchain with G-Cter in SUMO); alternate cross-link. Residue Ser-11 is modified to Phosphoserine. Position 12 is an N6-acetyllysine (Lys-12). N6-acetyllysine; alternate occurs at positions 17, 18, 22, and 23. Glycyl lysine isopeptide (Lys-Gly) (interchain with G-Cter in SUMO); alternate cross-links involve residues Lys-17 and Lys-18. At Lys-22 the chain carries N6-butyryllysine; alternate. Position 23 is an N6-methyllysine; alternate (Lys-23). An N6-succinyllysine modification is found at Lys-35. Lys-38 is subject to N6,N6-dimethyllysine. Residue Lys-47 is modified to N6-succinyllysine. A Glycyl lysine isopeptide (Lys-Gly) (interchain with G-Cter in ubiquitin) cross-link involves residue Lys-124.

The protein belongs to the histone H2B family. The nucleosome is a histone octamer containing two molecules each of H2A, H2B, H3 and H4 assembled in one H3-H4 heterotetramer and two H2A-H2B heterodimers. The octamer wraps approximately 147 bp of DNA. Interacts with NAP1. Monoubiquitinated by the RAD6/UBC2-BRE1 complex to form H2BK123ub1. H2BK123ub1 gives a specific tag for epigenetic transcriptional activation and is also prerequisite for H3K4me and H3K79me formation. H2BK123ub1 also modulates the formation of double-strand breaks during meiosis and is a prerequisite for DNA-damage checkpoint activation. Deubiquitination is performed by UBP8 in presence of SGF11. In terms of processing, phosphorylated by STE20 to form H2BS10ph during progression through meiotic prophase. May be correlated with chromosome condensation. H2BS10ph is also formed after H(2)O(2) treatment, and is a step leading to apoptosis. Post-translationally, acetylated by GCN5, a component of the SAGA complex, to form H2BK11ac and H2BK16ac. H2BK16ac can also be formed by ESA1, a component of the NuA4 histone acetyltransferase (HAT) complex. Acetylation of N-terminal lysines and particularly formation of H2BK11acK16ac has a positive effect on transcription. Sumoylation to form H2BK6su or H2BK7su, and probably also H2BK16su or H2BK17su, occurs preferentially near the telomeres and represses gene transcription.

It is found in the nucleus. Its subcellular location is the chromosome. Functionally, core component of nucleosome. Nucleosomes wrap and compact DNA into chromatin, limiting DNA accessibility to the cellular machineries which require DNA as a template. Histones thereby play a central role in transcription regulation, DNA repair, DNA replication and chromosomal stability. DNA accessibility is regulated via a complex set of post-translational modifications of histones, also called histone code, and nucleosome remodeling. This is Histone H2B.2 (HTB2) from Saccharomyces cerevisiae (strain ATCC 204508 / S288c) (Baker's yeast).